A 79-amino-acid chain; its full sequence is Protein SIP18 (79 aa).

The interval 1 to 79 is disordered; that stretch reads MSNMMNKFAE…DWKTYENMKK (79 aa). Residues 8 to 20 are compositionally biased toward basic and acidic residues; it reads FAEKLQGNDDSHQ.

In Saccharomyces cerevisiae (strain ATCC 204508 / S288c) (Baker's yeast), this protein is Protein SIP18 (SIP18).